Here is a 101-residue protein sequence, read N- to C-terminus: Small ribosomal subunit protein bS18c (101 aa).

Residues 1–19 (MDKSKRPFRKSKRSFRKRL) are compositionally biased toward basic residues. Positions 1–23 (MDKSKRPFRKSKRSFRKRLPPIG) are disordered.

The protein belongs to the bacterial ribosomal protein bS18 family. Part of the 30S ribosomal subunit.

The protein localises to the plastid. It is found in the chloroplast. This chain is Small ribosomal subunit protein bS18c, found in Chloranthus spicatus (Chulantree).